We begin with the raw amino-acid sequence, 70 residues long: Large ribosomal subunit protein bL31 (70 aa).

This sequence belongs to the bacterial ribosomal protein bL31 family. Type A subfamily. In terms of assembly, part of the 50S ribosomal subunit.

Functionally, binds the 23S rRNA. This chain is Large ribosomal subunit protein bL31, found in Chlorobium chlorochromatii (strain CaD3).